A 470-amino-acid chain; its full sequence is Neuraminidase (470 aa).

Residues 1–14 lie on the Intravirion side of the membrane; sequence MNPNQKIITIGSIS. Residues 11-32 form an involved in apical transport and lipid raft association region; sequence GSISLGLVVFNVLLHVVSIIVT. The helical transmembrane segment at 15-35 threads the bilayer; that stretch reads LGLVVFNVLLHVVSIIVTVLV. The tract at residues 32–86 is hypervariable stalk region; that stretch reads TVLVLGKGGNNGICNETVVREYNETVRIEKVTQWHNTNVVEYVPYWNGGTYMNNT. Residues 36-470 are Virion surface-facing; it reads LGKGGNNGIC…AILPFDIDKM (435 aa). Residues Asn-46, Asn-54, and Asn-84 are each glycosylated (N-linked (GlcNAc...) asparagine; by host). The head of neuraminidase stretch occupies residues 89–470; that stretch reads ICDAKGFAPF…AILPFDIDKM (382 aa). Intrachain disulfides connect Cys-90–Cys-417, Cys-122–Cys-127, Cys-182–Cys-229, Cys-231–Cys-236, Cys-277–Cys-290, Cys-279–Cys-288, Cys-316–Cys-335, and Cys-421–Cys-446. Arg-116 contacts substrate. Asn-144 is a glycosylation site (N-linked (GlcNAc...) asparagine; by host). Asp-149 serves as the catalytic Proton donor/acceptor. Arg-150 is a substrate binding site. 275–276 is a binding site for substrate; that stretch reads EE. Residue Arg-291 coordinates substrate. Ca(2+) contacts are provided by Asp-292, Gly-296, and Asp-322. Arg-368 contributes to the substrate binding site. Asn-398 carries N-linked (GlcNAc...) asparagine; by host glycosylation. The active-site Nucleophile is Tyr-402.

Belongs to the glycosyl hydrolase 34 family. Homotetramer. It depends on Ca(2+) as a cofactor. N-glycosylated.

Its subcellular location is the virion membrane. The protein resides in the host apical cell membrane. The catalysed reaction is Hydrolysis of alpha-(2-&gt;3)-, alpha-(2-&gt;6)-, alpha-(2-&gt;8)- glycosidic linkages of terminal sialic acid residues in oligosaccharides, glycoproteins, glycolipids, colominic acid and synthetic substrates.. Its activity is regulated as follows. Inhibited by the neuraminidase inhibitors zanamivir (Relenza) and oseltamivir (Tamiflu). These drugs interfere with the release of progeny virus from infected cells and are effective against all influenza strains. Resistance to neuraminidase inhibitors is quite rare. Its function is as follows. Catalyzes the removal of terminal sialic acid residues from viral and cellular glycoconjugates. Cleaves off the terminal sialic acids on the glycosylated HA during virus budding to facilitate virus release. Additionally helps virus spread through the circulation by further removing sialic acids from the cell surface. These cleavages prevent self-aggregation and ensure the efficient spread of the progeny virus from cell to cell. Otherwise, infection would be limited to one round of replication. Described as a receptor-destroying enzyme because it cleaves a terminal sialic acid from the cellular receptors. May facilitate viral invasion of the upper airways by cleaving the sialic acid moieties on the mucin of the airway epithelial cells. Likely to plays a role in the budding process through its association with lipid rafts during intracellular transport. May additionally display a raft-association independent effect on budding. Plays a role in the determination of host range restriction on replication and virulence. Sialidase activity in late endosome/lysosome traffic seems to enhance virus replication. This Influenza A virus (strain A/Duck/Ukraine/1/1963 H3N8) protein is Neuraminidase.